Consider the following 197-residue polypeptide: Large ribosomal subunit protein uL11 (197 aa).

Belongs to the universal ribosomal protein uL11 family. Part of the ribosomal stalk of the 50S ribosomal subunit. Interacts with L10 and the large rRNA to form the base of the stalk. L10 forms an elongated spine to which L12 dimers bind in a sequential fashion forming a multimeric L10(L12)X complex. Post-translationally, one or more lysine residues are methylated.

Functionally, forms part of the ribosomal stalk which helps the ribosome interact with GTP-bound translation factors. This is Large ribosomal subunit protein uL11 from Mycoplasma mobile (strain ATCC 43663 / 163K / NCTC 11711) (Mesomycoplasma mobile).